The following is a 620-amino-acid chain: UvrABC system protein C (620 aa).

Positions 13–92 constitute a GIY-YIG domain; sequence DKPGVYIMKN…IKKYSPRYNI (80 aa). The UVR domain occupies 204–239; sequence TSIIKKLKLEMEKAAEELEFEKAAKIRDRILAIELI.

It belongs to the UvrC family. In terms of assembly, interacts with UvrB in an incision complex.

It localises to the cytoplasm. Functionally, the UvrABC repair system catalyzes the recognition and processing of DNA lesions. UvrC both incises the 5' and 3' sides of the lesion. The N-terminal half is responsible for the 3' incision and the C-terminal half is responsible for the 5' incision. This Clostridium perfringens (strain 13 / Type A) protein is UvrABC system protein C.